The following is a 338-amino-acid chain: MAGVNLQLRHAYSIAQFVPTVSSPPPLPTQRVRLGTSPSRVLLCNLRANSAAAPILRTTRRSVIVSASSVSSAVDSDSLVEDRDDVGRIPLLEVRDLRAVIAESRQEILKGVNLVVYEGEVHAVMGKNGSGKSTFSKVLVGHPDYEVTGGSIVFKGQNLLDMEPEDRSLAGLFMSFQSPVEIPGVSNMDFLNMAFNARKRKLGQPELDPIQFYSHLVSKLEVVNMKTDFLNRNVNEGFSGGERKRNEILQLAVLGAELAILDEIDSGLDVDALQDVAKAVNGLLTPKNSVLMITHYQRLLDYIKPTLIHIMENGRIIKTGDNSLAKLLEKEGYKAISG.

The N-terminal 66 residues, 1-66, are a transit peptide targeting the chloroplast; sequence MAGVNLQLRH…RTTRRSVIVS (66 aa). In terms of domain architecture, ABC transporter spans 92–338; sequence LEVRDLRAVI…EKEGYKAISG (247 aa). Residue 126 to 133 coordinates ATP; it reads GKNGSGKS.

The protein belongs to the ABC transporter superfamily. ABCI family. In terms of assembly, interacts with NAP6. As to expression, present in all organs, with higher levels in aerial parts.

The protein localises to the plastid. It is found in the chloroplast. Essential protein. Required during embryo development, especially at early stages. Involved in chloroplast differentiation. This chain is ABC transporter I family member 6, chloroplastic (ABCI6), found in Arabidopsis thaliana (Mouse-ear cress).